Reading from the N-terminus, the 118-residue chain is Large ribosomal subunit protein uL18 (118 aa).

The protein belongs to the universal ribosomal protein uL18 family. In terms of assembly, part of the 50S ribosomal subunit; part of the 5S rRNA/L5/L18/L25 subcomplex. Contacts the 5S and 23S rRNAs.

This is one of the proteins that bind and probably mediate the attachment of the 5S RNA into the large ribosomal subunit, where it forms part of the central protuberance. The protein is Large ribosomal subunit protein uL18 of Rickettsia canadensis (strain McKiel).